The sequence spans 383 residues: Creatine kinase, testis isozyme (383 aa).

The Phosphagen kinase N-terminal domain occupies 14–100 (KRLSPEEEFP…LDPIIEDRHG (87 aa)). The span at 99–112 (HGGYKPTDKHKTDL) shows a compositional bias: basic and acidic residues. The disordered stretch occupies residues 99–119 (HGGYKPTDKHKTDLNPDNLKG). Residues 127–369 (YVISSRVRTG…KLLVEMEKKL (243 aa)) form the Phosphagen kinase C-terminal domain. Residues 130 to 134 (SSRVR), H193, R238, R294, 322 to 327 (RGTGGV), and D337 contribute to the ATP site.

This sequence belongs to the ATP:guanido phosphotransferase family. In terms of tissue distribution, exists in many tissues, but preferentially in testis.

It catalyses the reaction creatine + ATP = N-phosphocreatine + ADP + H(+). In terms of biological role, reversibly catalyzes the transfer of phosphate between ATP and various phosphogens (e.g. creatine phosphate). Creatine kinase isoenzymes play a central role in energy transduction in tissues with large, fluctuating energy demands, such as skeletal muscle, heart, brain and spermatozoa. This chain is Creatine kinase, testis isozyme (tck1), found in Oncorhynchus mykiss (Rainbow trout).